The chain runs to 297 residues: Superoxide dismutase 1 copper chaperone (297 aa).

C11 is a binding site for Cu cation. The disordered stretch occupies residues G222 to C263. Residues S234 to S257 are compositionally biased toward low complexity.

This sequence belongs to the CCS1 family.

Its subcellular location is the cytoplasm. Functionally, copper chaperone for superoxide dismutase 1 (sod1). Binds copper ions and delivers them specifically to sod1. Also has a role in cell protection against copper ion toxicity during conditions of copper excess. The C-terminal region is thought to act specifically in this sequestration role. In Schizosaccharomyces pombe (strain 972 / ATCC 24843) (Fission yeast), this protein is Superoxide dismutase 1 copper chaperone (ccs1).